We begin with the raw amino-acid sequence, 339 residues long: Anthranilate phosphoribosyltransferase (339 aa).

5-phospho-alpha-D-ribose 1-diphosphate-binding positions include Gly-79, 82–83 (GD), Thr-87, 89–92 (NVST), 107–115 (KHGNRAVSS), and Ser-119. Position 79 (Gly-79) interacts with anthranilate. Mg(2+) is bound at residue Ser-91. An anthranilate-binding site is contributed by Asn-110. Arg-165 is a binding site for anthranilate. Residues Asp-224 and Glu-225 each contribute to the Mg(2+) site.

Belongs to the anthranilate phosphoribosyltransferase family. Homodimer. Requires Mg(2+) as cofactor.

The catalysed reaction is N-(5-phospho-beta-D-ribosyl)anthranilate + diphosphate = 5-phospho-alpha-D-ribose 1-diphosphate + anthranilate. Its pathway is amino-acid biosynthesis; L-tryptophan biosynthesis; L-tryptophan from chorismate: step 2/5. Functionally, catalyzes the transfer of the phosphoribosyl group of 5-phosphorylribose-1-pyrophosphate (PRPP) to anthranilate to yield N-(5'-phosphoribosyl)-anthranilate (PRA). The sequence is that of Anthranilate phosphoribosyltransferase from Geobacillus kaustophilus (strain HTA426).